We begin with the raw amino-acid sequence, 47 residues long: Diuretic hormone 2 (47 aa).

It belongs to the sauvagine/corticotropin-releasing factor/urotensin I family.

The protein localises to the secreted. In terms of biological role, stimulates fluid secretion by the Malpighian tubules. Increases cyclic AMP production in Malpighian tubules. The protein is Diuretic hormone 2 of Tenebrio molitor (Yellow mealworm beetle).